Here is a 90-residue protein sequence, read N- to C-terminus: Large ribosomal subunit protein bL27 (90 aa).

The interval methionine 1–glycine 22 is disordered.

Belongs to the bacterial ribosomal protein bL27 family.

The polypeptide is Large ribosomal subunit protein bL27 (Caulobacter sp. (strain K31)).